A 561-amino-acid polypeptide reads, in one-letter code: MKLIYVFLLILAVRLASVFVVQTYYVPDEYWQSLEVAHKLTFGYGYLTWEWVQGIRSYVYPLLIAGLYKILALLQLDSAHLLVVLPRIVQALLSAYSDYRFFVWTGKRKWALFLILVPWFWFYTGSRTLANTLEASLTTIALSYFPWYGESTAYLWPAAICCFLRPTAAVIWLPLSLYHLRRSRQNVLELILKRFVLIGLLVAGLGIAIDTYWHGQLIVTPYEFLKYNIFNNIGSFYGSHPWHWYFSVGLPTVLGINTLPFIFGVMETVKKSEKYPVSKQLLITIFLTLVVLSAVEHKEFRFVSPLLPLCLYVITDALSRWSIRASSTMLWTTALVILVGNVMPAWYLSTVHQKGPIELMPKLREIAREYRDEREHQANILFLMPCHSTPYYSHIHQNVTMRFLTCEPNLEKKEQYKDEADRFFEDPVHWINSHIPMHPLTALPTHVVLFDPLAENISVFLRNYRLLHRIEHAEVTRLEGSQALVDQWSEALGAQSPNLASLLQNRQSRTGRSILVYQRLKKGEENAFNRGPDSGQHEPDVHDHPPLEDLVLANENENLFN.

Transmembrane regions (helical) follow at residues 3-25, 64-84, 110-130, 155-175, 195-215, 246-266, 275-295, and 328-348; these read LIYV…QTYY, IAGL…LLVV, WALF…RTLA, LWPA…WLPL, FVLI…YWHG, FSVG…FGVM, YPVS…LSAV, and TMLW…AWYL. N-linked (GlcNAc...) asparagine glycosylation is found at Asn398 and Asn456. The interval 525-546 is disordered; the sequence is ENAFNRGPDSGQHEPDVHDHPP. Over residues 535 to 546 the composition is skewed to basic and acidic residues; that stretch reads GQHEPDVHDHPP.

This sequence belongs to the glycosyltransferase 22 family. PIGB subfamily.

Its subcellular location is the endoplasmic reticulum membrane. Its pathway is glycolipid biosynthesis; glycosylphosphatidylinositol-anchor biosynthesis. Functionally, mannosyltransferase involved in glycosylphosphatidylinositol-anchor biosynthesis. Transfers the third alpha-1,2-mannose to Man2-GlcN-acyl-PI during GPI precursor assembly. In Drosophila melanogaster (Fruit fly), this protein is GPI mannosyltransferase 3.